The primary structure comprises 101 residues: Ubiquitin-related modifier 1 homolog (101 aa).

Residue G101 is modified to 1-thioglycine. G101 is covalently cross-linked (Glycyl lysine isopeptide (Gly-Lys) (interchain with K-? in acceptor proteins)).

It belongs to the URM1 family. Interacts with cer. Post-translationally, C-terminal thiocarboxylation occurs in 2 steps, it is first acyl-adenylated (-COAMP) via the hesA/moeB/thiF part of the MOCS3 homolog, then thiocarboxylated (-COSH) via the rhodanese domain of the MOCS3 homolog.

The protein resides in the cytoplasm. Its pathway is tRNA modification; 5-methoxycarbonylmethyl-2-thiouridine-tRNA biosynthesis. Functionally, acts as a sulfur carrier required for 2-thiolation of mcm(5)S(2)U at tRNA wobble positions of cytosolic tRNA(Lys), tRNA(Glu) and tRNA(Gln). Serves as sulfur donor in tRNA 2-thiolation reaction by being thiocarboxylated (-COSH) at its C-terminus by MOCS3. The sulfur is then transferred to tRNA to form 2-thiolation of mcm(5)S(2)U. Also acts as a ubiquitin-like protein (UBL) that is covalently conjugated via an isopeptide bond to lysine residues of target proteins such as Prx2/Jafrac1, Ciao1, Eip71CD and GILT1. The thiocarboxylated form serves as substrate for conjugation and oxidative stress specifically induces the formation of UBL-protein conjugates. The sequence is that of Ubiquitin-related modifier 1 homolog from Drosophila erecta (Fruit fly).